Here is a 207-residue protein sequence, read N- to C-terminus: 2,3-bisphosphoglycerate-dependent phosphoglycerate mutase (207 aa).

Substrate contacts are provided by residues Arg10–Asn17, Thr23–Gly24, Arg62, Glu89–Tyr92, Lys100, Arg116–Arg117, and Gly160–Asn161. His11 (tele-phosphohistidine intermediate) is an active-site residue. The active-site Proton donor/acceptor is Glu89.

Belongs to the phosphoglycerate mutase family. BPG-dependent PGAM subfamily. Homodimer.

It catalyses the reaction (2R)-2-phosphoglycerate = (2R)-3-phosphoglycerate. It functions in the pathway carbohydrate degradation; glycolysis; pyruvate from D-glyceraldehyde 3-phosphate: step 3/5. Catalyzes the interconversion of 2-phosphoglycerate and 3-phosphoglycerate. In Nitrobacter winogradskyi (strain ATCC 25391 / DSM 10237 / CIP 104748 / NCIMB 11846 / Nb-255), this protein is 2,3-bisphosphoglycerate-dependent phosphoglycerate mutase.